The primary structure comprises 611 residues: Dihydroxy-acid dehydratase (611 aa).

Asp-81 contributes to the Mg(2+) binding site. Cys-122 contacts [2Fe-2S] cluster. Mg(2+) is bound by residues Asp-123 and Lys-124. Lys-124 is modified (N6-carboxylysine). Cys-195 contributes to the [2Fe-2S] cluster binding site. Glu-491 is a binding site for Mg(2+). Ser-517 functions as the Proton acceptor in the catalytic mechanism.

This sequence belongs to the IlvD/Edd family. As to quaternary structure, homodimer. Requires [2Fe-2S] cluster as cofactor. It depends on Mg(2+) as a cofactor.

It catalyses the reaction (2R)-2,3-dihydroxy-3-methylbutanoate = 3-methyl-2-oxobutanoate + H2O. The enzyme catalyses (2R,3R)-2,3-dihydroxy-3-methylpentanoate = (S)-3-methyl-2-oxopentanoate + H2O. The protein operates within amino-acid biosynthesis; L-isoleucine biosynthesis; L-isoleucine from 2-oxobutanoate: step 3/4. Its pathway is amino-acid biosynthesis; L-valine biosynthesis; L-valine from pyruvate: step 3/4. Functions in the biosynthesis of branched-chain amino acids. Catalyzes the dehydration of (2R,3R)-2,3-dihydroxy-3-methylpentanoate (2,3-dihydroxy-3-methylvalerate) into 2-oxo-3-methylpentanoate (2-oxo-3-methylvalerate) and of (2R)-2,3-dihydroxy-3-methylbutanoate (2,3-dihydroxyisovalerate) into 2-oxo-3-methylbutanoate (2-oxoisovalerate), the penultimate precursor to L-isoleucine and L-valine, respectively. This chain is Dihydroxy-acid dehydratase, found in Brucella suis (strain ATCC 23445 / NCTC 10510).